We begin with the raw amino-acid sequence, 440 residues long: MTREKLLYLETFGCQMNVSDSEKIAALLKGIGYFPTQDSSQADLVILNTCSVRAKAEEKVYNHLVQYKGLKRKKPGIILGVGGCVAQQEGERLLANVPHLDIVFGTHNLHLLPELVRAAEKGERLAEVGFIDNETRLDLFPVDERTDGVSRFVTVMQGCENFCSYCIVPYVRGREISRRSADILGEVRGMAGNGVKEVTLLGQNVNSYGLKSSGEMSFIALLREVSLIPGIERIRFTTSHPKDFSQPLIDCFAEIPKLCRHIHLPAQSGSNAVLAAMNRGYTREEYLGSIARLKAACPSIQITGDIIVGFPGETEEDFQATLSLMEEVRYTDVFSFIYSKRPETKAAGYADEVGQDEKQGRLSRLLDLQRRITLETNKSFVGTVQQVLIEGESRRGGQFYGRTSGNRVVNLAADVSLVGSIVNVMITRGDQNSLQGELCR.

An MTTase N-terminal domain is found at 5 to 121; the sequence is KLLYLETFGC…LPELVRAAEK (117 aa). Positions 14, 50, 84, 159, 163, and 166 each coordinate [4Fe-4S] cluster. Residues 145-375 form the Radical SAM core domain; that stretch reads RTDGVSRFVT…LDLQRRITLE (231 aa). Residues 378-440 enclose the TRAM domain; it reads KSFVGTVQQV…QNSLQGELCR (63 aa).

It belongs to the methylthiotransferase family. MiaB subfamily. Monomer. Requires [4Fe-4S] cluster as cofactor.

It localises to the cytoplasm. The enzyme catalyses N(6)-dimethylallyladenosine(37) in tRNA + (sulfur carrier)-SH + AH2 + 2 S-adenosyl-L-methionine = 2-methylsulfanyl-N(6)-dimethylallyladenosine(37) in tRNA + (sulfur carrier)-H + 5'-deoxyadenosine + L-methionine + A + S-adenosyl-L-homocysteine + 2 H(+). Its function is as follows. Catalyzes the methylthiolation of N6-(dimethylallyl)adenosine (i(6)A), leading to the formation of 2-methylthio-N6-(dimethylallyl)adenosine (ms(2)i(6)A) at position 37 in tRNAs that read codons beginning with uridine. This is tRNA-2-methylthio-N(6)-dimethylallyladenosine synthase from Geotalea uraniireducens (strain Rf4) (Geobacter uraniireducens).